The chain runs to 262 residues: Dimeric xanthone biosynthesis cluster protein R11 (262 aa).

Residues I69–E160 form a hemerythrin-like region.

It participates in secondary metabolite biosynthesis. Part of the gene cluster that mediates the biosynthesis of the dimeric xanthones cryptosporioptides. The pathway begins with the synthesis of atrochrysone thioester by the polyketide synthase dmx-nrPKS. The atrochrysone carboxyl ACP thioesterase dmxR1 then breaks the thioester bond and releases the atrochrysone carboxylic acid from dmx-nrPKS. Atrochrysone carboxylic acid is decarboxylated by the decarboxylase dmxR15, and oxidized by the anthrone oxygenase dmxR16 to yield emodin. Emodin is then reduced to emodin hydroquinone by the oxidoreductase dmxR7. A-ring reduction by the short chain dehydrogenase dmxR18, dehydration by the scytalone dehydratase-like protein dmxR17 and probable spontaneous re-oxidation, results in overall deoxygenation to chrysophanol. Baeyer-Villiger oxidation by the Baeyer-Villiger monooxygenase (BVMO) dmxR6 then yields monodictylactone in equilibrium with monodictyphenone. In the case of the cryptosporioptides biosynthesis, monodictylactone is reduced at C-12 to an alcohol (by the short chain dehydrogenases dmxR12 or dmxR8) and hydroxylated at C-5 by dmxR9, yielding the electron-rich aromatic which could eliminate H(2)O to form the ortho-quinonemethide, followed by tautomerisation to paraquinone and complete the formal reduction to produce the 10-methylgroup. Conjugate addition of C-4a-OH to the resulting paraquinone by the monooxygenase dmxR10 then gives cyclohexadienone, which is then reduced at C-5 by the short chain dehydrogenase dmxR3 to give the dihydroxanthone. The 6,7-epoxide in the cryptosporioptides could be introduced by the cytochrome P450 monooxygenase dmxL3. The highly reducing PKS dmxL2 manufactures butyrate, which is further carboxylated by dmxL1 to form ethylmalonate. It is not yet clear whether the carboxylation occurs while the butyrate is attached to the ACP of dmxL2, but this unusual fungal metabolite could then be esterified to O-5 by the O-acetyltransferase dmxR13. Finally, dimerization performed by dmxR5 gives the observed dimers cryptosporioptides A, B and C as the final products of the pathway. This is Dimeric xanthone biosynthesis cluster protein R11 from Cryptosporiopsis sp. (strain 8999).